The following is a 103-amino-acid chain: Large ribosomal subunit protein uL24 (103 aa).

This sequence belongs to the universal ribosomal protein uL24 family. Part of the 50S ribosomal subunit.

One of two assembly initiator proteins, it binds directly to the 5'-end of the 23S rRNA, where it nucleates assembly of the 50S subunit. Functionally, one of the proteins that surrounds the polypeptide exit tunnel on the outside of the subunit. The sequence is that of Large ribosomal subunit protein uL24 from Rhizobium meliloti (strain 1021) (Ensifer meliloti).